Here is a 309-residue protein sequence, read N- to C-terminus: Interferon-inducible double-stranded RNA-dependent protein kinase activator A homolog A (309 aa).

The interval 1–22 (MSQERFPAAPKMSSEKPTSLDA) is disordered. 3 consecutive DRBM domains span residues 31-98 (TPIQ…ILRG), 123-191 (NPVG…KFKT), and 236-304 (DYVK…YLKI).

This sequence belongs to the PRKRA family. In terms of assembly, homodimer. Interacts with dicer1 and eif2ak2/pkr. Also able to interact with dsRNA.

It is found in the cytoplasm. It localises to the perinuclear region. Its subcellular location is the nucleus. Functionally, activates eif2ak2/pkr in the absence of double-stranded RNA (dsRNA), leading to phosphorylation of eif2s1/efi2-alpha and inhibition of translation and induction of apoptosis. Required for siRNA production by dicer1 and for subsequent siRNA-mediated post-transcriptional gene silencing. Does not seem to be required for processing of pre-miRNA to miRNA by dicer1. The polypeptide is Interferon-inducible double-stranded RNA-dependent protein kinase activator A homolog A (prkra-a) (Xenopus laevis (African clawed frog)).